A 199-amino-acid polypeptide reads, in one-letter code: Peroxynitrite isomerase (199 aa).

A GXWXGXG motif is present at residues 20–26; the sequence is GVWEGTG. His190 provides a ligand contact to heme b.

The protein belongs to the nitrobindin family. In terms of assembly, homodimer. Heme b serves as cofactor.

The enzyme catalyses peroxynitrite = nitrate. It functions in the pathway nitrogen metabolism. In terms of biological role, heme-binding protein able to scavenge peroxynitrite and to protect free L-tyrosine against peroxynitrite-mediated nitration, by acting as a peroxynitrite isomerase that converts peroxynitrite to nitrate. Therefore, this protein likely plays a role in peroxynitrite sensing and in the detoxification of reactive nitrogen and oxygen species (RNS and ROS, respectively). Is able to bind nitric oxide (NO) in vitro, but may act as a sensor of peroxynitrite levels in vivo. In Clavibacter michiganensis subsp. michiganensis (strain NCPPB 382), this protein is Peroxynitrite isomerase.